Here is a 232-residue protein sequence, read N- to C-terminus: Endonuclease V (232 aa).

Mg(2+)-binding residues include Asp-43 and Asp-109.

The protein belongs to the endonuclease V family. The cofactor is Mg(2+).

Its subcellular location is the cytoplasm. The enzyme catalyses Endonucleolytic cleavage at apurinic or apyrimidinic sites to products with a 5'-phosphate.. DNA repair enzyme involved in the repair of deaminated bases. Selectively cleaves double-stranded DNA at the second phosphodiester bond 3' to a deoxyinosine leaving behind the intact lesion on the nicked DNA. The polypeptide is Endonuclease V (Thermofilum pendens (strain DSM 2475 / Hrk 5)).